A 612-amino-acid polypeptide reads, in one-letter code: Zinc metalloproteinase-disintegrin-like 2a (612 aa).

Positions 1-20 (MIQVLLVTICLAVFPYQGSS) are cleaved as a signal peptide. Residues 21 to 189 (IILGSGNVND…KKASQLNLTP (169 aa)) constitute a propeptide that is removed on maturation. The Peptidase M12B domain occupies 199–395 (KYIELVIVAD…NRPPCILNKP (197 aa)). Ca(2+) is bound at residue glutamate 202. Asparagine 218 is a glycosylation site (N-linked (GlcNAc...) asparagine). Aspartate 286 is a binding site for Ca(2+). Intrachain disulfides connect cysteine 310–cysteine 390, cysteine 350–cysteine 374, and cysteine 352–cysteine 357. Residue histidine 335 participates in Zn(2+) binding. Glutamate 336 is a catalytic residue. The Zn(2+) site is built by histidine 339 and histidine 345. Ca(2+) is bound by residues cysteine 390, asparagine 393, valine 405, asparagine 408, phenylalanine 410, glutamate 412, glutamate 415, and aspartate 418. One can recognise a Disintegrin domain in the interval 403–489 (PPVCGNYFVE…DCPTDNFQRN (87 aa)). Intrachain disulfides connect cysteine 406-cysteine 435, cysteine 417-cysteine 430, cysteine 419-cysteine 425, cysteine 429-cysteine 452, cysteine 443-cysteine 449, cysteine 448-cysteine 474, cysteine 461-cysteine 481, cysteine 468-cysteine 500, cysteine 493-cysteine 505, cysteine 512-cysteine 562, cysteine 527-cysteine 573, cysteine 540-cysteine 550, cysteine 557-cysteine 599, and cysteine 593-cysteine 605. Residues 467-469 (ECD) carry the D/ECD-tripeptide motif.

The protein belongs to the venom metalloproteinase (M12B) family. P-III subfamily. Zn(2+) is required as a cofactor. In terms of tissue distribution, expressed by the venom gland.

It is found in the secreted. Functionally, snake venom metalloproteinase that impairs hemostasis in the envenomed animal. The chain is Zinc metalloproteinase-disintegrin-like 2a from Crotalus adamanteus (Eastern diamondback rattlesnake).